Here is a 209-residue protein sequence, read N- to C-terminus: MSKTPLSIAHPWHGPVLTRDDYESLCCYIEITPADSVKFELDKETGILKVDRPQKFSNFCPCLYGLLPKTYCGDLSGEYSGQQSNRENIKGDGDPLDICVLTEKNITQGNILLQARPIGGIRILDSEEADDKIIAVLEDDLVYGNIEDISECPGTVLDMIQHYFLTYKATPESLIQAKPAKIEIVGLYGKKEAQKVIRLAHEDYCNLFM.

The substrate site is built by Lys-38, Arg-52, and Tyr-64. Asp-92, Asp-97, and Asp-130 together coordinate Mg(2+). Residue Tyr-167 participates in substrate binding.

It belongs to the PPase family. Homohexamer. Requires Mg(2+) as cofactor.

Its subcellular location is the cytoplasm. The enzyme catalyses diphosphate + H2O = 2 phosphate + H(+). Functionally, catalyzes the hydrolysis of inorganic pyrophosphate (PPi) forming two phosphate ions. The chain is Inorganic pyrophosphatase from Chlamydia trachomatis serovar L2 (strain ATCC VR-902B / DSM 19102 / 434/Bu).